The chain runs to 311 residues: Coproporphyrin III ferrochelatase 1 (311 aa).

Residues Y12, R29, 45-46, S53, and Y124 contribute to the Fe-coproporphyrin III site; that span reads RY. Fe(2+) contacts are provided by H182 and E263.

Belongs to the ferrochelatase family.

The protein resides in the cytoplasm. The enzyme catalyses Fe-coproporphyrin III + 2 H(+) = coproporphyrin III + Fe(2+). It participates in porphyrin-containing compound metabolism; protoheme biosynthesis. Its function is as follows. Involved in coproporphyrin-dependent heme b biosynthesis. Catalyzes the insertion of ferrous iron into coproporphyrin III to form Fe-coproporphyrin III. This Bacillus cereus (strain ATCC 14579 / DSM 31 / CCUG 7414 / JCM 2152 / NBRC 15305 / NCIMB 9373 / NCTC 2599 / NRRL B-3711) protein is Coproporphyrin III ferrochelatase 1.